A 104-amino-acid chain; its full sequence is Phosphoribosyl-ATP pyrophosphatase (104 aa).

This sequence belongs to the PRA-PH family.

It localises to the cytoplasm. The enzyme catalyses 1-(5-phospho-beta-D-ribosyl)-ATP + H2O = 1-(5-phospho-beta-D-ribosyl)-5'-AMP + diphosphate + H(+). The protein operates within amino-acid biosynthesis; L-histidine biosynthesis; L-histidine from 5-phospho-alpha-D-ribose 1-diphosphate: step 2/9. The protein is Phosphoribosyl-ATP pyrophosphatase of Streptococcus sanguinis (strain SK36).